The sequence spans 207 residues: Small heat shock protein hspG7 (207 aa).

In terms of domain architecture, sHSP spans 30 to 207 (KTIIDILPPM…YSNTIKININ (178 aa)). Composition is skewed to low complexity over residues 84–101 (QQQQ…SSST) and 122–135 (STTS…ATTT). The tract at residues 84–149 (QQQQLVIEKS…EDENKTKSSD (66 aa)) is disordered. Over residues 136 to 149 (KENKEDENKTKSSD) the composition is skewed to basic and acidic residues.

Belongs to the small heat shock protein (HSP20) family.

In Dictyostelium discoideum (Social amoeba), this protein is Small heat shock protein hspG7 (hspG7).